The chain runs to 289 residues: MIPIEIDSGSGFCFGVVNAIRHAEKQLEKSSDKLYCLGDIVHNTLEVERLGKKGLETIDYDAFSRLRGAKVLLRAHGEPPEIYRMAGENGVTIIDATCPVVLRLQNKIKSRYEATRSLGAQVVIYGKRGHAEVNGLVGQTEGTAIVIESEEELDKIDYTRPVILFSQTTKSLEGFGQIIDSISTRMQPGVTFEHHDTICRQVANRIPHIGAFATAHELVFFVAGEKSSNGKVLFGHCLAANPRSIFISSPEVIVPDMLVPLPASIGICGATSTPRWQMEEVASHIKALL.

C13 serves as a coordination point for [4Fe-4S] cluster. (2E)-4-hydroxy-3-methylbut-2-enyl diphosphate contacts are provided by H42 and H76. Residues H42 and H76 each contribute to the dimethylallyl diphosphate site. Residues H42 and H76 each coordinate isopentenyl diphosphate. C98 serves as a coordination point for [4Fe-4S] cluster. A (2E)-4-hydroxy-3-methylbut-2-enyl diphosphate-binding site is contributed by H130. H130 lines the dimethylallyl diphosphate pocket. H130 contacts isopentenyl diphosphate. Residue E132 is the Proton donor of the active site. Residue T168 coordinates (2E)-4-hydroxy-3-methylbut-2-enyl diphosphate. C199 is a [4Fe-4S] cluster binding site. (2E)-4-hydroxy-3-methylbut-2-enyl diphosphate contacts are provided by S227, S228, N229, and S272. S227, S228, N229, and S272 together coordinate dimethylallyl diphosphate. 4 residues coordinate isopentenyl diphosphate: S227, S228, N229, and S272.

The protein belongs to the IspH family. [4Fe-4S] cluster is required as a cofactor.

It carries out the reaction isopentenyl diphosphate + 2 oxidized [2Fe-2S]-[ferredoxin] + H2O = (2E)-4-hydroxy-3-methylbut-2-enyl diphosphate + 2 reduced [2Fe-2S]-[ferredoxin] + 2 H(+). It catalyses the reaction dimethylallyl diphosphate + 2 oxidized [2Fe-2S]-[ferredoxin] + H2O = (2E)-4-hydroxy-3-methylbut-2-enyl diphosphate + 2 reduced [2Fe-2S]-[ferredoxin] + 2 H(+). It functions in the pathway isoprenoid biosynthesis; dimethylallyl diphosphate biosynthesis; dimethylallyl diphosphate from (2E)-4-hydroxy-3-methylbutenyl diphosphate: step 1/1. It participates in isoprenoid biosynthesis; isopentenyl diphosphate biosynthesis via DXP pathway; isopentenyl diphosphate from 1-deoxy-D-xylulose 5-phosphate: step 6/6. Its function is as follows. Catalyzes the conversion of 1-hydroxy-2-methyl-2-(E)-butenyl 4-diphosphate (HMBPP) into a mixture of isopentenyl diphosphate (IPP) and dimethylallyl diphosphate (DMAPP). Acts in the terminal step of the DOXP/MEP pathway for isoprenoid precursor biosynthesis. This chain is 4-hydroxy-3-methylbut-2-enyl diphosphate reductase, found in Porphyromonas gingivalis (strain ATCC BAA-308 / W83).